Consider the following 110-residue polypeptide: U-scoloptoxin(16)-Er7a (110 aa).

The N-terminal stretch at 1-26 is a signal peptide; sequence MTSTRKLSVSCLIVFMVSSLIAVSSG.

This sequence belongs to the scoloptoxin-16 family. Post-translationally, contains 4 disulfide bonds. As to expression, expressed by the venom gland.

It localises to the secreted. This is U-scoloptoxin(16)-Er7a from Ethmostigmus rubripes (Giant centipede).